The chain runs to 365 residues: Isopentenyl-diphosphate delta-isomerase (365 aa).

A substrate-binding site is contributed by 8-9; it reads RK. Residues 67-69, serine 97, and asparagine 126 each bind FMN; that span reads SIT. Residue 97–99 participates in substrate binding; the sequence is SQR. Glutamine 160 contributes to the substrate binding site. Glutamate 161 is a Mg(2+) binding site. Residues lysine 192, threonine 222, 272 to 274, and 293 to 294 contribute to the FMN site; these read GIR and AL.

It belongs to the IPP isomerase type 2 family. As to quaternary structure, homooctamer. Dimer of tetramers. FMN serves as cofactor. The cofactor is NADPH. Mg(2+) is required as a cofactor.

It localises to the cytoplasm. The enzyme catalyses isopentenyl diphosphate = dimethylallyl diphosphate. Its function is as follows. Involved in the biosynthesis of isoprenoids. Catalyzes the 1,3-allylic rearrangement of the homoallylic substrate isopentenyl (IPP) to its allylic isomer, dimethylallyl diphosphate (DMAPP). This is Isopentenyl-diphosphate delta-isomerase from Methanosarcina mazei (strain ATCC BAA-159 / DSM 3647 / Goe1 / Go1 / JCM 11833 / OCM 88) (Methanosarcina frisia).